The following is a 456-amino-acid chain: tRNA modification GTPase MnmE (456 aa).

Residues Arg-24, Glu-81, and Lys-120 each contribute to the (6S)-5-formyl-5,6,7,8-tetrahydrofolate site. In terms of domain architecture, TrmE-type G spans 216-379 (GMTVVIAGRP…LRDHLKACMG (164 aa)). Residue Asn-226 coordinates K(+). GTP-binding positions include 226–231 (NAGKSS), 245–251 (TDIAGTT), 270–273 (DTAG), and 335–338 (NKAD). Ser-230 is a Mg(2+) binding site. The K(+) site is built by Thr-245, Ile-247, and Thr-250. Mg(2+) is bound at residue Thr-251. (6S)-5-formyl-5,6,7,8-tetrahydrofolate is bound at residue Lys-456.

This sequence belongs to the TRAFAC class TrmE-Era-EngA-EngB-Septin-like GTPase superfamily. TrmE GTPase family. Homodimer. Heterotetramer of two MnmE and two MnmG subunits. Requires K(+) as cofactor.

The protein localises to the cytoplasm. Exhibits a very high intrinsic GTPase hydrolysis rate. Involved in the addition of a carboxymethylaminomethyl (cmnm) group at the wobble position (U34) of certain tRNAs, forming tRNA-cmnm(5)s(2)U34. This chain is tRNA modification GTPase MnmE, found in Pseudomonas fluorescens (strain ATCC BAA-477 / NRRL B-23932 / Pf-5).